The following is a 450-amino-acid chain: Glucose-6-phosphate isomerase (450 aa).

Glutamate 290 functions as the Proton donor in the catalytic mechanism. Residues histidine 311 and lysine 425 contribute to the active site.

This sequence belongs to the GPI family.

It is found in the cytoplasm. It catalyses the reaction alpha-D-glucose 6-phosphate = beta-D-fructose 6-phosphate. It functions in the pathway carbohydrate biosynthesis; gluconeogenesis. It participates in carbohydrate degradation; glycolysis; D-glyceraldehyde 3-phosphate and glycerone phosphate from D-glucose: step 2/4. Its function is as follows. Catalyzes the reversible isomerization of glucose-6-phosphate to fructose-6-phosphate. This Listeria innocua serovar 6a (strain ATCC BAA-680 / CLIP 11262) protein is Glucose-6-phosphate isomerase.